Reading from the N-terminus, the 688-residue chain is Pescadillo homolog (688 aa).

One can recognise a BRCT domain in the interval 351–470 (EVASLFASFT…KLLRHDLYAP (120 aa)). 2 disordered regions span residues 411-442 (RPPLPESALPPLPQNPGEGAEKAPRVRPGTRM) and 496-688 (AEQE…TKGR). Over residues 412 to 424 (PPLPESALPPLPQ) the composition is skewed to pro residues. A coiled-coil region spans residues 496 to 536 (AEQESDGEAERQAEEENEEEESEVEGLSMDKEMVETENSEA). Acidic residues-rich tracts occupy residues 510 to 519 (EENEEEESEV), 530 to 544 (ETENSEAGESDEESV), 554 to 565 (GSDDEEEESEED), and 576 to 589 (EAADVQSESEDDEE). A compositionally biased stretch (basic residues) spans 619 to 634 (KKSKKQKPLAKKHAAQ). Residues 627-686 (LAKKHAAQKKKEQEELERQKMMMSRKKRKLLDKMLYSNKKKDEEAEKLRRKRRKIEQGTK) adopt a coiled-coil conformation. Residues 635–646 (KKKEQEELERQK) are compositionally biased toward basic and acidic residues.

This sequence belongs to the pescadillo family. Component of the NOP7 complex, composed of ERB1, NOP7 and YTM1. The complex is held together by ERB1, which interacts with NOP7 via its N-terminal domain and with YTM1 via a high-affinity interaction between the seven-bladed beta-propeller domains of the 2 proteins. The NOP7 complex associates with the 66S pre-ribosome.

It localises to the nucleus. The protein resides in the nucleolus. The protein localises to the nucleoplasm. In terms of biological role, component of the NOP7 complex, which is required for maturation of the 25S and 5.8S ribosomal RNAs and formation of the 60S ribosome. This is Pescadillo homolog from Coccidioides immitis (strain RS) (Valley fever fungus).